A 348-amino-acid chain; its full sequence is Photosystem II protein D1 (348 aa).

3 consecutive transmembrane segments (helical) span residues 33–50 (YIGWFGILMFPLLVLATV), 122–137 (HFIFGAGAYMGREWEF), and 146–160 (WIFVAFSAPLVAASA). H122 lines the chlorophyll a pocket. Y130 contributes to the pheophytin a binding site. 2 residues coordinate [CaMn4O5] cluster: D174 and E193. The helical transmembrane segment at 201–222 (FHILGVAAVFGGSLFSAMHGSL) threads the bilayer. H202 lines the chlorophyll a pocket. A quinone is bound by residues H219 and 268–269 (SF). Fe cation is bound at residue H219. H276 contacts Fe cation. The helical transmembrane segment at 278–292 (FLAAWPVIGIWFTSL) threads the bilayer. The [CaMn4O5] cluster site is built by H336, E337, D346, and A348.

It belongs to the reaction center PufL/M/PsbA/D family. PSII is composed of 1 copy each of membrane proteins PsbA, PsbB, PsbC, PsbD, PsbE, PsbF, PsbH, PsbI, PsbJ, PsbK, PsbL, PsbM, PsbT, PsbX, PsbY, PsbZ, Psb30/Ycf12, at least 3 peripheral proteins of the oxygen-evolving complex and a large number of cofactors. It forms dimeric complexes. It depends on The D1/D2 heterodimer binds P680, chlorophylls that are the primary electron donor of PSII, and subsequent electron acceptors. It shares a non-heme iron and each subunit binds pheophytin, quinone, additional chlorophylls, carotenoids and lipids. D1 provides most of the ligands for the Mn4-Ca-O5 cluster of the oxygen-evolving complex (OEC). There is also a Cl(-1) ion associated with D1 and D2, which is required for oxygen evolution. The PSII complex binds additional chlorophylls, carotenoids and specific lipids. as a cofactor. Post-translationally, tyr-165 forms a radical intermediate that is referred to as redox-active TyrZ, YZ or Y-Z.

It localises to the plastid. The protein resides in the chloroplast thylakoid membrane. The enzyme catalyses 2 a plastoquinone + 4 hnu + 2 H2O = 2 a plastoquinol + O2. Its function is as follows. Photosystem II (PSII) is a light-driven water:plastoquinone oxidoreductase that uses light energy to abstract electrons from H(2)O, generating O(2) and a proton gradient subsequently used for ATP formation. It consists of a core antenna complex that captures photons, and an electron transfer chain that converts photonic excitation into a charge separation. The D1/D2 (PsbA/PsbD) reaction center heterodimer binds P680, the primary electron donor of PSII as well as several subsequent electron acceptors. The sequence is that of Photosystem II protein D1 from Heterocapsa triquetra (Dinoflagellate).